A 537-amino-acid chain; its full sequence is Eukaryotic translation initiation factor 3 subunit L (537 aa).

Residues 1-19 are compositionally biased toward basic and acidic residues; it reads MSRRVEFDLSTEDHSDRRR. The tract at residues 1–30 is disordered; it reads MSRRVEFDLSTEDHSDRRRTNTFSSSADED. Residues 299 to 487 enclose the PCI domain; it reads EATKMFVNCL…GPSSADDDEP (189 aa).

It belongs to the eIF-3 subunit L family. In terms of assembly, component of the eukaryotic translation initiation factor 3 (eIF-3) complex.

It is found in the cytoplasm. Component of the eukaryotic translation initiation factor 3 (eIF-3) complex, which is involved in protein synthesis of a specialized repertoire of mRNAs and, together with other initiation factors, stimulates binding of mRNA and methionyl-tRNAi to the 40S ribosome. The eIF-3 complex specifically targets and initiates translation of a subset of mRNAs involved in cell proliferation. This chain is Eukaryotic translation initiation factor 3 subunit L, found in Caenorhabditis elegans.